Here is a 905-residue protein sequence, read N- to C-terminus: uncharacterized protein (905 aa).

WD repeat units lie at residues 42–82 (RSLK…FQAV), 86–128 (GYAR…SDPK), 136–175 (STLD…DSVS), and 177–217 (VNTQ…SDNY). Residues S394 and S397 each carry the phosphoserine modification.

Belongs to the WD repeat mio family.

This is an uncharacterized protein from Schizosaccharomyces pombe (strain 972 / ATCC 24843) (Fission yeast).